The sequence spans 314 residues: Ribosomal RNA small subunit methyltransferase H (314 aa).

Residues 36-38 (GGH), aspartate 56, phenylalanine 83, aspartate 104, and glutamine 111 contribute to the S-adenosyl-L-methionine site.

Belongs to the methyltransferase superfamily. RsmH family.

Its subcellular location is the cytoplasm. It carries out the reaction cytidine(1402) in 16S rRNA + S-adenosyl-L-methionine = N(4)-methylcytidine(1402) in 16S rRNA + S-adenosyl-L-homocysteine + H(+). Specifically methylates the N4 position of cytidine in position 1402 (C1402) of 16S rRNA. This Syntrophotalea carbinolica (strain DSM 2380 / NBRC 103641 / GraBd1) (Pelobacter carbinolicus) protein is Ribosomal RNA small subunit methyltransferase H.